The sequence spans 305 residues: Ornithine carbamoyltransferase (305 aa).

Carbamoyl phosphate is bound by residues 52–55 (STRT), Gln79, Arg103, and 130–133 (HPLQ). L-ornithine is bound by residues Asn162, Asp224, and 228-229 (SM). Residues 264 to 265 (CL) and Arg292 contribute to the carbamoyl phosphate site.

Belongs to the aspartate/ornithine carbamoyltransferase superfamily. OTCase family.

It localises to the cytoplasm. It catalyses the reaction carbamoyl phosphate + L-ornithine = L-citrulline + phosphate + H(+). Its pathway is amino-acid biosynthesis; L-arginine biosynthesis; L-arginine from L-ornithine and carbamoyl phosphate: step 1/3. In terms of biological role, reversibly catalyzes the transfer of the carbamoyl group from carbamoyl phosphate (CP) to the N(epsilon) atom of ornithine (ORN) to produce L-citrulline. This chain is Ornithine carbamoyltransferase, found in Pyrobaculum islandicum (strain DSM 4184 / JCM 9189 / GEO3).